Consider the following 279-residue polypeptide: Isopentenyl-diphosphate delta-isomerase idi1 (279 aa).

Residue K78 coordinates substrate. 2 residues coordinate Mg(2+): H82 and H93. A Nudix hydrolase domain is found at 91-249 (LLHRAFSVFL…GLKFTPWFKL (159 aa)). Residues Q111 and K116 each contribute to the substrate site. C128 is a catalytic residue. S129 provides a ligand contact to substrate. Residues 129–162 (SHPLGIPGETGAELDAAVLGVKRAAQRKLDQELG) carry the Nudix box motif. Positions 191 and 193 each coordinate Mg(2+). Residue E193 is part of the active site.

It belongs to the IPP isomerase type 1 family. It depends on Mg(2+) as a cofactor.

It carries out the reaction isopentenyl diphosphate = dimethylallyl diphosphate. It participates in isoprenoid biosynthesis; dimethylallyl diphosphate biosynthesis; dimethylallyl diphosphate from isopentenyl diphosphate: step 1/1. Functionally, isopentenyl-diphosphate delta-isomerase; part of the second module of ergosterol biosynthesis pathway that includes the middle steps of the pathway. Idi1 catalyzes the 1,3-allylic rearrangement of isopentenyl (IPP) to its highly electrophilic allylic isomer, dimethylallyl diphosphate (DMAPP). The second module is carried out in the vacuole and involves the formation of farnesyl diphosphate, which is also an important intermediate in the biosynthesis of ubiquinone, dolichol, heme and prenylated proteins. Activity by the mevalonate kinase erg12 (AFUA_4G07780) first converts mevalonate into 5-phosphomevalonate. 5-phosphomevalonate is then further converted to 5-diphosphomevalonate by the phosphomevalonate kinase erg8 (AFUA_5G10680). The diphosphomevalonate decarboxylase mvd1 (AFUA_4G07130) then produces isopentenyl diphosphate. The isopentenyl-diphosphate delta-isomerase idi1 (AFUA_6G11160) then catalyzes the 1,3-allylic rearrangement of the homoallylic substrate isopentenyl (IPP) to its highly electrophilic allylic isomer, dimethylallyl diphosphate (DMAPP). Finally the farnesyl diphosphate synthase erg20 (AFUA_5G02450) catalyzes the sequential condensation of isopentenyl pyrophosphate with dimethylallyl pyrophosphate, and then with the resultant geranylpyrophosphate to the ultimate product farnesyl pyrophosphate. The chain is Isopentenyl-diphosphate delta-isomerase idi1 from Aspergillus fumigatus (strain ATCC MYA-4609 / CBS 101355 / FGSC A1100 / Af293) (Neosartorya fumigata).